A 309-amino-acid chain; its full sequence is Sulfate adenylyltransferase subunit 2 (309 aa).

It belongs to the PAPS reductase family. CysD subfamily. As to quaternary structure, heterodimer composed of CysD, the smaller subunit, and CysN.

The catalysed reaction is sulfate + ATP + H(+) = adenosine 5'-phosphosulfate + diphosphate. The protein operates within sulfur metabolism; hydrogen sulfide biosynthesis; sulfite from sulfate: step 1/3. In terms of biological role, with CysN forms the ATP sulfurylase (ATPS) that catalyzes the adenylation of sulfate producing adenosine 5'-phosphosulfate (APS) and diphosphate, the first enzymatic step in sulfur assimilation pathway. APS synthesis involves the formation of a high-energy phosphoric-sulfuric acid anhydride bond driven by GTP hydrolysis by CysN coupled to ATP hydrolysis by CysD. This Methylorubrum extorquens (strain CM4 / NCIMB 13688) (Methylobacterium extorquens) protein is Sulfate adenylyltransferase subunit 2.